Here is a 711-residue protein sequence, read N- to C-terminus: Amino-acid racemase (711 aa).

The Cytoplasmic portion of the chain corresponds to M1–R14. The helical transmembrane segment at F15–T35 threads the bilayer. Over G36–N37 the chain is Extracellular. Residues F38–F58 form a helical membrane-spanning segment. The Cytoplasmic portion of the chain corresponds to F59–T78. The helical transmembrane segment at T79 to F99 threads the bilayer. Over K100 to T117 the chain is Extracellular. Residues L118–V138 form a helical membrane-spanning segment. The Cytoplasmic portion of the chain corresponds to K139 to A146. Residues F147–V167 traverse the membrane as a helical segment. At K168–R188 the chain is on the extracellular side. A helical membrane pass occupies residues N189–N209. The Cytoplasmic segment spans residues R210–H241. A helical membrane pass occupies residues D242 to F262. Residues R263–S306 are Extracellular-facing. The chain crosses the membrane as a helical span at residues L307 to L327. The Cytoplasmic portion of the chain corresponds to L328–A711. The interval A336–A711 is racemase. The active-site Proton acceptor is the K376. N6-(pyridoxal phosphate)lysine is present on K376. R470 is a substrate binding site. The active-site Proton acceptor is the Y602. Residue M651 coordinates substrate.

This sequence in the N-terminal section; belongs to the acyltransferase 3 family. It in the C-terminal section; belongs to the alanine racemase family. Requires pyridoxal 5'-phosphate as cofactor.

It is found in the cell membrane. The chain is Amino-acid racemase (vanTG) from Enterococcus faecalis (Streptococcus faecalis).